A 235-amino-acid polypeptide reads, in one-letter code: Isopentenyl-diphosphate Delta-isomerase I (235 aa).

Lys-38 contacts substrate. Mg(2+) contacts are provided by His-42 and His-54. In terms of domain architecture, Nudix hydrolase spans 52 to 204 (LLHRAFSVFL…GLKLSPWFRL (153 aa)). Substrate-binding residues include Arg-73 and Lys-77. The active site involves Cys-89. Ser-90 is a substrate binding site. Mg(2+) contacts are provided by Glu-149 and Glu-151. Glu-151 is an active-site residue.

It belongs to the IPP isomerase type 1 family. Requires Mg(2+) as cofactor.

The enzyme catalyses isopentenyl diphosphate = dimethylallyl diphosphate. Its pathway is isoprenoid biosynthesis; dimethylallyl diphosphate biosynthesis; dimethylallyl diphosphate from isopentenyl diphosphate: step 1/1. It functions in the pathway porphyrin-containing compound metabolism; chlorophyll biosynthesis. Catalyzes the 1,3-allylic rearrangement of the homoallylic substrate isopentenyl (IPP) to its highly electrophilic allylic isomer, dimethylallyl diphosphate (DMAPP). The chain is Isopentenyl-diphosphate Delta-isomerase I (IPI1) from Camptotheca acuminata (Happy tree).